The primary structure comprises 341 residues: S-adenosylmethionine:tRNA ribosyltransferase-isomerase (341 aa).

Belongs to the QueA family. In terms of assembly, monomer.

It localises to the cytoplasm. It carries out the reaction 7-aminomethyl-7-carbaguanosine(34) in tRNA + S-adenosyl-L-methionine = epoxyqueuosine(34) in tRNA + adenine + L-methionine + 2 H(+). It participates in tRNA modification; tRNA-queuosine biosynthesis. Its function is as follows. Transfers and isomerizes the ribose moiety from AdoMet to the 7-aminomethyl group of 7-deazaguanine (preQ1-tRNA) to give epoxyqueuosine (oQ-tRNA). The polypeptide is S-adenosylmethionine:tRNA ribosyltransferase-isomerase (Clostridium beijerinckii (strain ATCC 51743 / NCIMB 8052) (Clostridium acetobutylicum)).